We begin with the raw amino-acid sequence, 361 residues long: Chorismate synthase (361 aa).

NADP(+) contacts are provided by Arg-48 and Arg-54. FMN contacts are provided by residues 125–127, 238–239, Gly-278, 293–297, and Arg-319; these read RSS, NA, and KPTSS.

This sequence belongs to the chorismate synthase family. Homotetramer. FMNH2 serves as cofactor.

It catalyses the reaction 5-O-(1-carboxyvinyl)-3-phosphoshikimate = chorismate + phosphate. It participates in metabolic intermediate biosynthesis; chorismate biosynthesis; chorismate from D-erythrose 4-phosphate and phosphoenolpyruvate: step 7/7. In terms of biological role, catalyzes the anti-1,4-elimination of the C-3 phosphate and the C-6 proR hydrogen from 5-enolpyruvylshikimate-3-phosphate (EPSP) to yield chorismate, which is the branch point compound that serves as the starting substrate for the three terminal pathways of aromatic amino acid biosynthesis. This reaction introduces a second double bond into the aromatic ring system. In Escherichia coli (strain K12 / MC4100 / BW2952), this protein is Chorismate synthase.